We begin with the raw amino-acid sequence, 338 residues long: D-erythrose-4-phosphate dehydrogenase (338 aa).

Position 11–12 (11–12) interacts with NAD(+); the sequence is RI. Substrate is bound by residues 153-155, Arg-199, 212-213, and Arg-235; these read SCT and TK. Cys-154 (nucleophile) is an active-site residue. Asn-317 serves as a coordination point for NAD(+).

The protein belongs to the glyceraldehyde-3-phosphate dehydrogenase family. Epd subfamily. In terms of assembly, homotetramer.

It is found in the cytoplasm. It carries out the reaction D-erythrose 4-phosphate + NAD(+) + H2O = 4-phospho-D-erythronate + NADH + 2 H(+). It participates in cofactor biosynthesis; pyridoxine 5'-phosphate biosynthesis; pyridoxine 5'-phosphate from D-erythrose 4-phosphate: step 1/5. In terms of biological role, catalyzes the NAD-dependent conversion of D-erythrose 4-phosphate to 4-phosphoerythronate. This is D-erythrose-4-phosphate dehydrogenase from Shewanella baltica (strain OS223).